A 162-amino-acid polypeptide reads, in one-letter code: Probable chorismate pyruvate-lyase (162 aa).

R54, L92, and E149 together coordinate substrate.

Belongs to the UbiC family.

It localises to the cytoplasm. The catalysed reaction is chorismate = 4-hydroxybenzoate + pyruvate. It participates in cofactor biosynthesis; ubiquinone biosynthesis. Functionally, removes the pyruvyl group from chorismate, with concomitant aromatization of the ring, to provide 4-hydroxybenzoate (4HB) for the ubiquinone pathway. The polypeptide is Probable chorismate pyruvate-lyase (Methylococcus capsulatus (strain ATCC 33009 / NCIMB 11132 / Bath)).